Reading from the N-terminus, the 531-residue chain is MELTLWTYEGPPHIGAMRIASSMKGVHYVLHAPQGDTYADLLFTMIERRGQRPPVTYTTFQARDLGGDTAELVKGHIREAVDRFKPEALLVGESCTAELIQDQPGSLAKGMGYEIPIISLELPAYSKKENWGAAETFYQLVRGLLKDSPKSESEHNPSKWKTEGRRPRVNLLGPSLLGFRCRDDVLEVQKILAHHGIDINVVAPLGAAPADIIRINEADANICLYPEIAESTCIWLERNFGHPYTKTIPIGVGATNDFLNEIHQLLGMELPKQEEEDGSQSRLTWYSKSVDSNYLTGKRVFIFGDGTHVLAASRIAHKELGFEVVGLGTYSREMARKVRDAAKELGLEALITNDYLAVEEAIKESAPELVLGTQMERHSAKRLGIPCAVISTPMHVQDVPARYSPQMGWEGANVIFDDWVHPLMMGLEEHLIGMFRHDFEFTDGHQSHLGHLGGHSTEKETKAPSFYQEKVQSSRPEHFPHWTPEGESELAKIPFFVRGKVRKNTEKYANQIGCKEIDGETLLDAKAHFNA.

Asp36 is a binding site for [4Fe-4S] cluster. The Proton donor role is filled by Asp291. Residue 426–427 participates in substrate binding; it reads GL.

It belongs to the ChlB/BchB/BchZ family. As to quaternary structure, protochlorophyllide reductase is composed of three subunits; ChlL, ChlN and ChlB. Forms a heterotetramer of two ChlB and two ChlN subunits. [4Fe-4S] cluster serves as cofactor.

It catalyses the reaction chlorophyllide a + oxidized 2[4Fe-4S]-[ferredoxin] + 2 ADP + 2 phosphate = protochlorophyllide a + reduced 2[4Fe-4S]-[ferredoxin] + 2 ATP + 2 H2O. It functions in the pathway porphyrin-containing compound metabolism; chlorophyll biosynthesis (light-independent). In terms of biological role, component of the dark-operative protochlorophyllide reductase (DPOR) that uses Mg-ATP and reduced ferredoxin to reduce ring D of protochlorophyllide (Pchlide) to form chlorophyllide a (Chlide). This reaction is light-independent. The NB-protein (ChlN-ChlB) is the catalytic component of the complex. This is Light-independent protochlorophyllide reductase subunit B from Prochlorococcus marinus (strain MIT 9211).